The chain runs to 107 residues: Large ribosomal subunit protein uL24 (107 aa).

Belongs to the universal ribosomal protein uL24 family. In terms of assembly, part of the 50S ribosomal subunit.

Functionally, one of two assembly initiator proteins, it binds directly to the 5'-end of the 23S rRNA, where it nucleates assembly of the 50S subunit. In terms of biological role, one of the proteins that surrounds the polypeptide exit tunnel on the outside of the subunit. The polypeptide is Large ribosomal subunit protein uL24 (Thermotoga neapolitana (strain ATCC 49049 / DSM 4359 / NBRC 107923 / NS-E)).